We begin with the raw amino-acid sequence, 1472 residues long: ABC multidrug transporter atrI (1472 aa).

Positions 1-28 (MRRSNVVPVHSLTSSTNTGRDSRGEKYD) are disordered. Residues 134–384 (FRRETWNFRN…FERQGWFCPP (251 aa)) enclose the ABC transporter 1 domain. Asn143, Asn277, Asn308, and Asn332 each carry an N-linked (GlcNAc...) asparagine glycan. The next 7 helical transmembrane spans lie at 506 to 526 (ILALIVGSVFYGTPTATAGFY), 530 to 550 (ATLFYAVLLNALTAMTEINSL), 580 to 600 (IPVKFLMAIAFNIILYFLSGL), 605 to 625 (SQFFIYFLITFIIMFVMSAVF), 639 to 659 (MTLAGVLILMLVIYTGFVVPV), 664 to 684 (PWFKWIHYLNPIFYAFEILIA), and 744 to 764 (FGILIAFLIGFMVIYFVATEL). Basic and acidic residues predominate over residues 784–793 (AHLKNGHEPG). The disordered stretch occupies residues 784-821 (AHLKNGHEPGADEEAGAGKTVVSSSAEENKQDQGITSI). Over residues 804-821 (VVSSSAEENKQDQGITSI) the composition is skewed to polar residues. The ABC transporter 2 domain maps to 828–1070 (FTWRDVVYDI…TLLKYFESHG (243 aa)). 864–871 (GVSGAGKT) serves as a coordination point for ATP. A run of 6 helical transmembrane segments spans residues 1168 to 1188 (YIAAKMMLGICAGLFIGFSFF), 1204 to 1224 (VFMLCAIFSSLVQQIIPLFIT), 1244 to 1264 (FMIANIIVEIPYQILMGILVF), 1282 to 1302 (LVLLFCIQFFIYASTFADFVI), 1309 to 1329 (ETAGAIVTLQFSMALTFNGVM), and 1337 to 1357 (GFWIFMYRVSPFTYWVGGMAA). The N-linked (GlcNAc...) asparagine glycan is linked to Asn1402. Residues 1433 to 1453 (FGIFWAYVVFDIAVAVMLYYC) form a helical membrane-spanning segment. The N-linked (GlcNAc...) asparagine glycan is linked to Asn1460.

It belongs to the ABC transporter superfamily. ABCG family. PDR (TC 3.A.1.205) subfamily.

Its subcellular location is the cell membrane. It catalyses the reaction itraconazole(in) + ATP + H2O = itraconazole(out) + ADP + phosphate + H(+). It carries out the reaction voriconazole(in) + ATP + H2O = voriconazole(out) + ADP + phosphate + H(+). The enzyme catalyses fluconazole(in) + ATP + H2O = fluconazole(out) + ADP + phosphate + H(+). Its function is as follows. Pleiotropic ABC efflux transporter involved in the basal level of azole susceptibility. Confers resistance to fluconazole, itraconazole and voriconazole. The sequence is that of ABC multidrug transporter atrI from Aspergillus fumigatus (strain ATCC MYA-4609 / CBS 101355 / FGSC A1100 / Af293) (Neosartorya fumigata).